Here is a 409-residue protein sequence, read N- to C-terminus: Multidrug efflux pump Tap (409 aa).

12 consecutive transmembrane segments (helical) span residues leucine 10–phenylalanine 30, isoleucine 46–valine 66, leucine 80–valine 98, alanine 104–alanine 123, serine 144–leucine 168, methionine 174–leucine 193, phenylalanine 218–methionine 240, leucine 260–serine 282, alanine 289–leucine 308, leucine 313–valine 335, valine 348–leucine 370, and glycine 375–leucine 397.

Belongs to the major facilitator superfamily. Drug:H(+) antiporter-3 (DHA3) (TC 2.A.1.21) family.

It is found in the cell inner membrane. With respect to regulation, efflux activity is inhibited by carbonyl cyanide m-chlorophenylhydrazone (CCCP) and reserpine, but not by o-vanadate or chlorpromazine (CPZ). Functionally, efflux pump that contributes to intrinsic antibiotic resistance. The pump uses the electrochemical gradient as a source of energy. Confers low-level resistance to tetracycline and to several aminoglycosides, including streptomycin, gentamicin, 2'-N-ethylnetilmicin and 6'-N-ethylnetilmicin. In Mycolicibacterium fortuitum (Mycobacterium fortuitum), this protein is Multidrug efflux pump Tap.